The primary structure comprises 1379 residues: MLNSLYSGNRLRVDFSNVAKEIDVPNLLQLQKKSFDHFLNLDNSQTESGIEKVFKSIFPIHDPQNRLTLEYVSSEISKPRYTVRECMERGLTYCVNLKIKIRLIVHDRDEKTSEKVGVKDIKEQEIFVREIPLMTDRISFIINGVERVVVNQLHRSPGVIFKEEESPTVVNKLIYTAQIIPDRGSWLYFEYDTKDVLYVRINKRRKVPITILFRALGYKKQDIVKLFYPIQTLNIKNNKFLTMFNPDDFSGRVDYDIKDEDGNILHQAGKRLTKKKADKLIEDGLKFVEYPIEVLVNRYLASPVIDKESGEVIYDTLTQLDENKLAKIVAEQNSIEIANDLASGVDDAIINSFLQDYETLKLLKQTEGLEDENDLAAIRIYKVMRPGEPVVKEAARTFVNDLFFNPERYDLTKVGRMKMNHKLGLSVPEYVTVLTNEDIIKTAKYLIKVKNGQGYIDDRDHLGNRRIRSIGELLANELHLGFVKMQKAIRDKFTSLSNNVDELMPYDLVNPKMITTTIMEFFTGGQLSQFMDQTNPLSEVTHKRRLSALGEGGLVKERAGFEVRDVHPTHYGRICPVETPEGQNIGLINTLSTYAKVNDLGFVESPYRRVIDGKVTNEIVYLTATQEEGHIIAPASTVLDANDIIKEDLIEVRRDGEMLLAKREDVTLIDLCSGMVMGVAASLIPFLEHDDANRALMGSNMQRQAVPLLRSTAPIVGTGMEAIVARDAWEAIKAKRGGVIEKVDNRNIFILGEDENGPYIDQYTMEKNLRTNQNTTFSQHPIVKKGDMVKSGQIIADGSSMEKGELAIGKNALIAFMPWNGYNYEDAIVMSERMIRADAFTSVHIYEKEIEARELKDGVEEITRDIPNMKEEDLMHLDESGIVKIGTHIKPGMILVGKVSPKGEVKPTPEERLLRAIFGEKAGHVVNKSLYAGASLEGVVIDVKIFTKKGYEKDARSFKAYEDEKNILEKEHHDRLLMLDREEMLRVTALLSKNPLESELEIGKNSYKKGDKIKRSDLDNVNRFTLNTYVKCFSKEIQKTYEDMKAYFQNEKKKLKDEHDAKLEILEKDDILPSGVVKLVKVYLATKRKLKVGDKMAGRHGNKGIVSNIVPDVDMPYLPNGRTVDIVLNPLGVPSRMNIGQILESHLGLVGMKLGEQIEEIFENKKAEWIKELRAKMTEIADVSRLMDAKAILSKIDDDKLIDYARDWASGVRFATPIFEGVKADEFKKLFEMAKIDMDGKTELYDGRTGSKMAERVNVGCMYMLKLHHLVDEKVHARSTGPYSLVTQQPVGGKALSGGQRFGEMEVWALEAYGAAHTLREMLTVKSDDVEGRLAAYKALTRGENVPSTGIPETFFVLTNELKSLALDVEIYDEEENNE.

This sequence belongs to the RNA polymerase beta chain family. The RNAP catalytic core consists of 2 alpha, 1 beta, 1 beta' and 1 omega subunit. When a sigma factor is associated with the core the holoenzyme is formed, which can initiate transcription.

It carries out the reaction RNA(n) + a ribonucleoside 5'-triphosphate = RNA(n+1) + diphosphate. Functionally, DNA-dependent RNA polymerase catalyzes the transcription of DNA into RNA using the four ribonucleoside triphosphates as substrates. The sequence is that of DNA-directed RNA polymerase subunit beta from Campylobacter fetus subsp. fetus (strain 82-40).